A 355-amino-acid polypeptide reads, in one-letter code: UDP-galactose translocator 1 (355 aa).

The tract at residues methionine 1–arginine 36 is disordered. Basic and acidic residues predominate over residues serine 9–glutamate 30. The next 6 helical transmembrane spans lie at valine 40 to isoleucine 60, tryptophan 177 to alanine 197, isoleucine 211 to phenylalanine 231, valine 282 to tyrosine 302, serine 309 to aspartate 329, and isoleucine 330 to tyrosine 350.

It belongs to the nucleotide-sugar transporter family. SLC35A subfamily.

Its subcellular location is the membrane. It localises to the cytoplasmic granule membrane. The polypeptide is UDP-galactose translocator 1 (ugtp-1) (Caenorhabditis elegans).